A 233-amino-acid polypeptide reads, in one-letter code: Pyridoxal phosphate homeostasis protein (233 aa).

Residue Lys-36 is modified to N6-(pyridoxal phosphate)lysine.

This sequence belongs to the pyridoxal phosphate-binding protein YggS/PROSC family.

Pyridoxal 5'-phosphate (PLP)-binding protein, which is involved in PLP homeostasis. This is Pyridoxal phosphate homeostasis protein from Vibrio alginolyticus.